The chain runs to 342 residues: L-threonine 3-dehydrogenase (342 aa).

Residue cysteine 38 coordinates Zn(2+). Catalysis depends on charge relay system residues threonine 40 and histidine 43. Residues histidine 63, glutamate 64, cysteine 93, cysteine 96, cysteine 99, and cysteine 107 each coordinate Zn(2+). Residues isoleucine 175, aspartate 195, arginine 200, 262 to 264 (LGI), and 286 to 287 (IY) contribute to the NAD(+) site.

This sequence belongs to the zinc-containing alcohol dehydrogenase family. Homotetramer. Zn(2+) is required as a cofactor.

It localises to the cytoplasm. It carries out the reaction L-threonine + NAD(+) = (2S)-2-amino-3-oxobutanoate + NADH + H(+). Its pathway is amino-acid degradation; L-threonine degradation via oxydo-reductase pathway; glycine from L-threonine: step 1/2. Catalyzes the NAD(+)-dependent oxidation of L-threonine to 2-amino-3-ketobutyrate. The chain is L-threonine 3-dehydrogenase from Aeromonas salmonicida (strain A449).